The primary structure comprises 152 residues: Protein-export protein SecB (152 aa).

It belongs to the SecB family. Homotetramer, a dimer of dimers. One homotetramer interacts with 1 SecA dimer.

It localises to the cytoplasm. Functionally, one of the proteins required for the normal export of preproteins out of the cell cytoplasm. It is a molecular chaperone that binds to a subset of precursor proteins, maintaining them in a translocation-competent state. It also specifically binds to its receptor SecA. The sequence is that of Protein-export protein SecB from Rickettsia felis (strain ATCC VR-1525 / URRWXCal2) (Rickettsia azadi).